We begin with the raw amino-acid sequence, 298 residues long: Iron-regulated virulence regulatory protein IrgB (298 aa).

In terms of domain architecture, HTH lysR-type spans 1 to 59 (MQDLSAVKAFHALCQHKSLTAAAKALEQPKSTLSRRLAQLEEDLGQSLLMRQGNRLTLT). The H-T-H motif DNA-binding region spans 19–38 (LTAAAKALEQPKSTLSRRLA).

Belongs to the LysR transcriptional regulatory family.

In terms of biological role, transcription activation of the irgA gene. In the presence of sufficient iron, transcription of both irgA and irgB is negatively regulated by a fur-like protein. In low iron conditions, negative regulation of transcription is removed, and production of irgB leads to positive transcriptional activation of irgA. The polypeptide is Iron-regulated virulence regulatory protein IrgB (irgB) (Vibrio cholerae serotype O1 (strain ATCC 39315 / El Tor Inaba N16961)).